Reading from the N-terminus, the 338-residue chain is Glycerol-3-phosphate dehydrogenase [NAD(P)+] (338 aa).

NADPH contacts are provided by S13, W14, and K108. The sn-glycerol 3-phosphate site is built by K108, G139, and S141. Residue A143 coordinates NADPH. Positions 194, 247, 257, 258, and 259 each coordinate sn-glycerol 3-phosphate. The active-site Proton acceptor is the K194. R258 serves as a coordination point for NADPH. V282 and E284 together coordinate NADPH.

Belongs to the NAD-dependent glycerol-3-phosphate dehydrogenase family.

The protein resides in the cytoplasm. The catalysed reaction is sn-glycerol 3-phosphate + NAD(+) = dihydroxyacetone phosphate + NADH + H(+). It catalyses the reaction sn-glycerol 3-phosphate + NADP(+) = dihydroxyacetone phosphate + NADPH + H(+). It functions in the pathway membrane lipid metabolism; glycerophospholipid metabolism. Its function is as follows. Catalyzes the reduction of the glycolytic intermediate dihydroxyacetone phosphate (DHAP) to sn-glycerol 3-phosphate (G3P), the key precursor for phospholipid synthesis. The chain is Glycerol-3-phosphate dehydrogenase [NAD(P)+] from Streptococcus pneumoniae (strain JJA).